The chain runs to 62 residues: Large ribosomal subunit protein uL30 (62 aa).

It belongs to the universal ribosomal protein uL30 family. Part of the 50S ribosomal subunit.

The chain is Large ribosomal subunit protein uL30 from Paracoccus denitrificans (strain Pd 1222).